The chain runs to 346 residues: Peripherin-2 (346 aa).

Residues 1–24 are Cytoplasmic-facing; the sequence is MALLKVKFDQKKRVKLAQGLWLMN. A helical transmembrane segment spans residues 25–43; the sequence is WLSVLAGIVLFSLGLFLKI. Topologically, residues 44–61 are lumenal; it reads ELRKRSEVMNNSESHFVP. An N-linked (GlcNAc...) asparagine glycan is attached at Asn53. Residues 62-80 traverse the membrane as a helical segment; sequence NSLIGVGVLSCVFNSLAGK. Topologically, residues 81–99 are cytoplasmic; it reads ICYDALDPAKYAKWKPWLK. A helical membrane pass occupies residues 100 to 123; that stretch reads PYLAVCIFFNVILFLVALCCFLLR. Residues 124–264 are Lumenal-facing; the sequence is GSLESTLAYG…LNYYSSLMNS (141 aa). The N-linked (GlcNAc...) asparagine glycan is linked to Asn229. Residues 265-290 form a helical membrane-spanning segment; it reads MGVVTLLVWLFEVSITAGLRYLHTAL. Residues 291-346 are Cytoplasmic-facing; sequence ESVSNPEDPECESEGWLLEKSVPETWKAFLESFKKLGKSNQVEAEGADAGPAPEAG. The segment at 341–346 is interaction with MREG; it reads PAPEAG.

This sequence belongs to the PRPH2/ROM1 family. As to quaternary structure, homodimer; disulfide-linked. Forms a homotetramer. Forms a heterotetramer with ROM1. Homotetramer and heterotetramer core complexes go on to form higher order complexes by formation of intermolecular disulfide bonds. Interacts with MREG. Interacts with STX3 isoform 3B. Interacts with SNAP25. Expressed in the retina (at protein level).

The protein localises to the membrane. The protein resides in the cell projection. It localises to the cilium. Its subcellular location is the photoreceptor outer segment. It is found in the photoreceptor inner segment. Its function is as follows. Essential for retina photoreceptor outer segment disk morphogenesis, may also play a role with ROM1 in the maintenance of outer segment disk structure. Required for the maintenance of retinal outer nuclear layer thickness. Required for the correct development and organization of the photoreceptor inner segment. In Mus musculus (Mouse), this protein is Peripherin-2 (Prph2).